Consider the following 299-residue polypeptide: ATP synthase gamma chain (299 aa).

It belongs to the ATPase gamma chain family. In terms of assembly, F-type ATPases have 2 components, CF(1) - the catalytic core - and CF(0) - the membrane proton channel. CF(1) has five subunits: alpha(3), beta(3), gamma(1), delta(1), epsilon(1). CF(0) has three main subunits: a, b and c.

Its subcellular location is the cell inner membrane. Functionally, produces ATP from ADP in the presence of a proton gradient across the membrane. The gamma chain is believed to be important in regulating ATPase activity and the flow of protons through the CF(0) complex. The protein is ATP synthase gamma chain of Rhodospirillum rubrum.